Here is a 442-residue protein sequence, read N- to C-terminus: Magnesium transporter MRS2-1 (442 aa).

The tract at residues 1–30 (MSELKERLLPPRPASAMNLRDASVTRPSAS) is disordered. The next 2 helical transmembrane spans lie at 378–398 (LLLT…GIFG) and 414–434 (WVLI…VWFF). The short motif at 398–400 (GMN) is the Required for magnesium transport activity element.

The protein belongs to the CorA metal ion transporter (MIT) (TC 1.A.35.5) family. In terms of tissue distribution, expressed in the whole plant except stems.

The protein localises to the membrane. In terms of biological role, magnesium transporter that may mediate the influx of magnesium. This Arabidopsis thaliana (Mouse-ear cress) protein is Magnesium transporter MRS2-1 (MRS2-1).